Here is a 318-residue protein sequence, read N- to C-terminus: Transaldolase (318 aa).

The Schiff-base intermediate with substrate role is filled by lysine 132.

Belongs to the transaldolase family. Type 1 subfamily. As to quaternary structure, homodimer.

Its subcellular location is the cytoplasm. It carries out the reaction D-sedoheptulose 7-phosphate + D-glyceraldehyde 3-phosphate = D-erythrose 4-phosphate + beta-D-fructose 6-phosphate. Its pathway is carbohydrate degradation; pentose phosphate pathway; D-glyceraldehyde 3-phosphate and beta-D-fructose 6-phosphate from D-ribose 5-phosphate and D-xylulose 5-phosphate (non-oxidative stage): step 2/3. Its function is as follows. Transaldolase is important for the balance of metabolites in the pentose-phosphate pathway. In Shewanella sediminis (strain HAW-EB3), this protein is Transaldolase.